We begin with the raw amino-acid sequence, 965 residues long: Aminopeptidase N (965 aa).

At 2-8 the chain is on the cytoplasmic side; sequence AKGFYIS. A helical; Signal-anchor for type II membrane protein membrane pass occupies residues 9 to 32; it reads KTLGILGILLGVAAVCTIIALSVV. Residues 33-68 are cytosolic Ser/Thr-rich junction; sequence YAQEKNRNAENSAIAPTLPGSTSATTSTTNPAIDES. Topologically, residues 33 to 965 are extracellular; it reads YAQEKNRNAE…VVLKWFTENS (933 aa). The tract at residues 44–68 is disordered; it reads SAIAPTLPGSTSATTSTTNPAIDES. Residues 47 to 64 are compositionally biased toward low complexity; it reads APTLPGSTSATTSTTNPA. The metalloprotease stretch occupies residues 69–965; it reads KPWNQYRLPK…VVLKWFTENS (897 aa). N114 and N128 each carry an N-linked (GlcNAc...) asparagine glycan. Y176 carries the sulfotyrosine modification. N-linked (GlcNAc...) asparagine glycosylation is found at N234, N242, and N264. 351 to 355 lines the substrate pocket; the sequence is GAMEN. H387 provides a ligand contact to Zn(2+). The Proton acceptor role is filled by E388. Zn(2+) contacts are provided by H391 and E410. Residues N555, N606, and N624 are each glycosylated (N-linked (GlcNAc...) asparagine). C760 and C767 are oxidised to a cystine. N780 carries N-linked (GlcNAc...) asparagine glycosylation. C797 and C833 are oxidised to a cystine. Y852 carries the phosphotyrosine modification.

Belongs to the peptidase M1 family. In terms of assembly, homodimer. Interacts with SLC6A19. The cofactor is Zn(2+). Sulfated. In terms of processing, N- and O-glycosylated. Post-translationally, may undergo proteolysis and give rise to a soluble form. As to expression, widely distributed throughout the CNS. Particularly abundant in kidney and intestinal microvilli, also detected in lung and liver. Weakly expressed in heart and aorta.

The protein resides in the cell membrane. It catalyses the reaction Release of an N-terminal amino acid, Xaa-|-Yaa- from a peptide, amide or arylamide. Xaa is preferably Ala, but may be most amino acids including Pro (slow action). When a terminal hydrophobic residue is followed by a prolyl residue, the two may be released as an intact Xaa-Pro dipeptide.. Broad specificity aminopeptidase which plays a role in the final digestion of peptides generated from hydrolysis of proteins by gastric and pancreatic proteases. Also involved in the processing of various peptides including peptide hormones, such as angiotensin III and IV, neuropeptides, and chemokines. May also be involved the cleavage of peptides bound to major histocompatibility complex class II molecules of antigen presenting cells. May have a role in angiogenesis and promote cholesterol crystallization. May have a role in amino acid transport by acting as binding partner of amino acid transporter SLC6A19 and regulating its activity. The chain is Aminopeptidase N (Anpep) from Rattus norvegicus (Rat).